The following is a 172-amino-acid chain: Myosin regulatory light chain RLC-A (172 aa).

The segment covering 1–16 has biased composition (basic residues); that stretch reads MSSKRAKTKTTKKRPQ. The segment at 1–20 is disordered; it reads MSSKRAKTKTTKKRPQRATS. A Phosphothreonine; by MLCK modification is found at threonine 19. At serine 20 the chain carries Phosphoserine; by MLCK. EF-hand domains lie at 29-64, 98-133, and 134-169; these read SQIQ…MGKN, DPED…MGDR, and FTDE…GAKD. Ca(2+)-binding residues include aspartate 42, asparagine 44, aspartate 46, and aspartate 53.

Myosin is a hexamer of 2 heavy chains and 4 light chains. In terms of processing, phosphorylation increases the actin-activated myosin ATPase activity and thereby regulates the contractile activity.

Functionally, myosin regulatory subunit that plays an important role in regulation of both smooth muscle and nonmuscle cell contractile activity via its phosphorylation. Implicated in cytokinesis, receptor capping, and cell locomotion. The sequence is that of Myosin regulatory light chain RLC-A (Rlc-a) from Rattus norvegicus (Rat).